The sequence spans 2453 residues: Nuclear receptor corepressor 1 (2453 aa).

Positions 1-29 are enriched in polar residues; that stretch reads MSSSGYPPNQGAFSTEQSRYPSHSVQYTF. Disordered stretches follow at residues 1 to 116, 147 to 177, and 206 to 231; these read MSSS…QVSD, PAFG…SKLS, and QQQL…VEQK. The interaction with ZBTB33 and HEXIM1 stretch occupies residues 1–373; it reads MSSSGYPPNQ…QRGAGLSATI (373 aa). Residues 51–64 are compositionally biased toward low complexity; it reads SQASQLLQQQQQQQ. 2 stretches are compositionally biased toward basic and acidic residues: residues 77–88 and 99–116; these read PGSDRPQERRSG and VDHD…QVSD. S172 carries the post-translational modification Phosphoserine. Residues 174 to 216 are a coiled coil; it reads SKLSKEELIQSMDRVDREIAKVEQQILKLKKKQQQLEEEAAKP. Positions 212–221 are enriched in basic and acidic residues; sequence EAAKPPEPEK. S224 is modified (phosphoserine). The tract at residues 254–312 is interaction with SIN3A/B; the sequence is FEGLGPKVELPLYNQPSDTKVYHENIKTNQVMRKKLILFFKRRNHARKQREQKICQRYD. Positions 299–328 form a coiled coil; it reads ARKQREQKICQRYDQLMEAWEKKVDRIENN. An SANT 1 domain is found at 435-486; the sequence is QFMNVWTDHEKEIFKDKFIQHPKNFGLIASYLERKSVPDCVLYYYLTKKNEN. 2 disordered regions span residues 497–631 and 677–908; these read KRRG…TEEE and LLQQ…PERQ. Positions 501-550 form a coiled coil; that stretch reads RNQQIARPSQEEKVEEKEEDKAEKTEKKEEEKKDDEEKDDKEDSKETTKE. 2 stretches are compositionally biased toward basic and acidic residues: residues 509-531 and 541-556; these read SQEE…KEEE and KEDS…RTEA. The segment covering 592–604 has biased composition (low complexity); that stretch reads EAAAANAAAAATE. A compositionally biased stretch (pro residues) spans 605–616; sequence EPPPPLPPPPEP. An SANT 2 domain is found at 622-673; sequence VETSRWTEEEMEVAKKGLVEHGRNWAAIAKMVGTKSEAQCKNFYFNYKRRHN. The span at 697-707 shows a compositional bias: polar residues; it reads QCESVASTVSA. Residues 708 to 727 show a composition bias toward acidic residues; that stretch reads QEDEDIEASNEEENPEDSEG. Low complexity predominate over residues 771 to 787; the sequence is TTDPAPCASPSSAVPTT. The span at 851–885 shows a compositional bias: basic and acidic residues; that stretch reads GEGDAKERDLESTSEKTEARDEDVVVAEQIERPEP. The residue at position 1011 (S1011) is a Phosphoserine. Residues 1034-1058 are disordered; the sequence is VRLPTTRPTRPPPPLIPSSKTTVAS. A Glycyl lysine isopeptide (Lys-Gly) (interchain with G-Cter in SUMO1); alternate cross-link involves residue K1117. K1117 participates in a covalent cross-link: Glycyl lysine isopeptide (Lys-Gly) (interchain with G-Cter in SUMO2); alternate. S1122 is modified (phosphoserine). A Glycyl lysine isopeptide (Lys-Gly) (interchain with G-Cter in SUMO2) cross-link involves residue K1195. Phosphoserine occurs at positions 1206, 1207, 1274, 1292, and 1333. At K1347 the chain carries N6-acetyllysine. Position 1378 is a phosphothreonine (T1378). Residue K1400 forms a Glycyl lysine isopeptide (Lys-Gly) (interchain with G-Cter in SUMO2) linkage. Residue K1423 forms a Glycyl lysine isopeptide (Lys-Gly) (interchain with G-Cter in SUMO2); alternate linkage. N6-acetyllysine; alternate is present on K1423. A disordered region spans residues 1450 to 1544; the sequence is GEPVRARHTS…SIPAKSPVPG (95 aa). Phosphoserine is present on residues S1459 and S1481. Residues 1459–1469 are compositionally biased toward polar residues; that stretch reads SVVSSGPSVLR. The segment covering 1495-1514 has biased composition (polar residues); it reads VSYQNTISRGSPMMNRTSDV. Residues 1510 to 2453 form an interaction with C1D region; the sequence is RTSDVSSSKS…QYETLSDSDD (944 aa). K1525 participates in a covalent cross-link: Glycyl lysine isopeptide (Lys-Gly) (interchain with G-Cter in SUMO2). At S1598 the chain carries Phosphoserine. 2 disordered regions span residues 1697–1780 and 1902–1939; these read RPYN…VRTQ and ALPS…RTRG. Composition is skewed to basic and acidic residues over residues 1718–1745 and 1919–1937; these read AERE…RERI and AGKD…ELRT. The CORNR box 1 signature appears at 1949 to 1953; the sequence is IDVII. The tract at residues 1959-2060 is disordered; that stretch reads SDKDARERGS…SSQSEGMGQV (102 aa). Low complexity predominate over residues 1968 to 1979; it reads SQSSDSSSSLSS. Residues S1993 and S1997 each carry the phosphoserine modification. An ID1 region spans residues 2050 to 2129; that stretch reads PSSQSEGMGQ…QSQTVLHPRP (80 aa). A required for interaction with RARA in the absence of its ligand region spans residues 2065–2068; sequence RLIT. Positions 2073–2077 match the CORNR box 2 motif; it reads ICQII. A compositionally biased stretch (polar residues) spans 2088-2124; it reads SQASTSTFQTSPSALSSTPVRTKTSSRYSPESQSQTV. Positions 2088–2174 are disordered; that stretch reads SQASTSTFQT…SPPQGPAVHE (87 aa). Phosphoserine occurs at positions 2116, 2134, 2150, 2165, and 2198. Residues 2138–2156 are compositionally biased toward basic and acidic residues; it reads LVDKSRGSRPGKSPERSHI. Residues 2226 to 2287 form an ID2 region; the sequence is IFRKLNSSGG…EDIIRKALMG (62 aa). Positions 2277–2281 match the CORNR box 3 motif; sequence LEDII. The segment at 2303-2396 is disordered; sequence PVGIMPGSAS…RPSSTGSTQF (94 aa). A compositionally biased stretch (low complexity) spans 2310–2319; that stretch reads SASTSVVTSS. Position 2412 is a phosphothreonine (T2412). S2449 and S2451 each carry phosphoserine.

Belongs to the N-CoR nuclear receptor corepressors family. As to quaternary structure, forms a large corepressor complex that contains SIN3A/B and histone deacetylases HDAC1 and HDAC2. This complex associates with the thyroid receptor (TR) and the retinoid acid receptor (RAR) in the absence of ligand. Interacts directly with RARA; the interaction is facilitated with RARA trimethylation. Component of the N-Cor repressor complex, at least composed of CBFA2T3, HEXIM1, NCOR1, NCOR2, HDAC3, TBL1X, TBL1XR1, CORO2A and GPS2. Interacts with ZBTB33; the interaction serves to recruit the N-CoR complex to promoter regions containing methylated CpG dinucleotides. Interacts with TRIM28 and KDM3A. Interacts (via the RD1 domain) with BAZ1A (via its N-terminal); the interaction corepresses a number of NCOR1-regulated genes. Interacts with BCL6, C1D, DACH1, HEXIM1, HDAC7, RORA, RORC, SAP30, SIAH2, SIN3A and SIN3B. May interact with DEAF1. Interacts with RXRA. Interacts with SETD5. Interacts with VDR. Interacts with ZBTB7A. Interacts with AR. Interacts with HDAC3. In terms of processing, ubiquitinated; mediated by SIAH2 and leading to its subsequent proteasomal degradation. Ubiquitous.

Its subcellular location is the nucleus. Functionally, mediates transcriptional repression by certain nuclear receptors. Part of a complex which promotes histone deacetylation and the formation of repressive chromatin structures which may impede the access of basal transcription factors. Participates in the transcriptional repressor activity produced by BCL6. Recruited by ZBTB7A to the androgen response elements/ARE on target genes, negatively regulates androgen receptor signaling and androgen-induced cell proliferation. Mediates the NR1D1-dependent repression and circadian regulation of TSHB expression. The NCOR1-HDAC3 complex regulates the circadian expression of the core clock gene ARTNL/BMAL1 and the genes involved in lipid metabolism in the liver. The chain is Nuclear receptor corepressor 1 (Ncor1) from Mus musculus (Mouse).